We begin with the raw amino-acid sequence, 380 residues long: Cytochrome b (380 aa).

4 helical membrane passes run 33–53 (FGSL…FLAM), 77–98 (WMIR…FLHI), 113–133 (WNIG…GYVL), and 178–198 (FFTL…LHLL). Heme b is bound by residues histidine 83 and histidine 97. The heme b site is built by histidine 182 and histidine 196. A ubiquinone is bound at residue histidine 201. Transmembrane regions (helical) follow at residues 226–246 (IKDI…TLLS), 288–308 (LGGV…PALH), 320–340 (LSQF…WIGG), and 347–367 (FITI…LLMP).

The protein belongs to the cytochrome b family. In terms of assembly, the cytochrome bc1 complex contains 11 subunits: 3 respiratory subunits (MT-CYB, CYC1 and UQCRFS1), 2 core proteins (UQCRC1 and UQCRC2) and 6 low-molecular weight proteins (UQCRH/QCR6, UQCRB/QCR7, UQCRQ/QCR8, UQCR10/QCR9, UQCR11/QCR10 and a cleavage product of UQCRFS1). This cytochrome bc1 complex then forms a dimer. Heme b serves as cofactor.

Its subcellular location is the mitochondrion inner membrane. Its function is as follows. Component of the ubiquinol-cytochrome c reductase complex (complex III or cytochrome b-c1 complex) that is part of the mitochondrial respiratory chain. The b-c1 complex mediates electron transfer from ubiquinol to cytochrome c. Contributes to the generation of a proton gradient across the mitochondrial membrane that is then used for ATP synthesis. This chain is Cytochrome b (MT-CYB), found in Pongo pygmaeus (Bornean orangutan).